A 577-amino-acid polypeptide reads, in one-letter code: 2-succinyl-5-enolpyruvyl-6-hydroxy-3-cyclohexene-1-carboxylate synthase (577 aa).

It belongs to the TPP enzyme family. MenD subfamily. As to quaternary structure, homodimer. Mg(2+) is required as a cofactor. The cofactor is Mn(2+). It depends on thiamine diphosphate as a cofactor.

The enzyme catalyses isochorismate + 2-oxoglutarate + H(+) = 5-enolpyruvoyl-6-hydroxy-2-succinyl-cyclohex-3-ene-1-carboxylate + CO2. It participates in quinol/quinone metabolism; 1,4-dihydroxy-2-naphthoate biosynthesis; 1,4-dihydroxy-2-naphthoate from chorismate: step 2/7. It functions in the pathway quinol/quinone metabolism; menaquinone biosynthesis. In terms of biological role, catalyzes the thiamine diphosphate-dependent decarboxylation of 2-oxoglutarate and the subsequent addition of the resulting succinic semialdehyde-thiamine pyrophosphate anion to isochorismate to yield 2-succinyl-5-enolpyruvyl-6-hydroxy-3-cyclohexene-1-carboxylate (SEPHCHC). The chain is 2-succinyl-5-enolpyruvyl-6-hydroxy-3-cyclohexene-1-carboxylate synthase from Enterococcus faecalis (strain ATCC 700802 / V583).